The primary structure comprises 193 residues: dCTP deaminase (193 aa).

DCTP-binding positions include 110–115, aspartate 128, 136–138, tyrosine 171, lysine 178, and glutamine 182; these read RSSLAR and VLE. Catalysis depends on glutamate 138, which acts as the Proton donor/acceptor. Positions 171 to 193 are disordered; that stretch reads YHQRQDAKYHNQKGAVASRIDKD.

Belongs to the dCTP deaminase family. Homotrimer.

The enzyme catalyses dCTP + H2O + H(+) = dUTP + NH4(+). The protein operates within pyrimidine metabolism; dUMP biosynthesis; dUMP from dCTP (dUTP route): step 1/2. Catalyzes the deamination of dCTP to dUTP. This Hamiltonella defensa subsp. Acyrthosiphon pisum (strain 5AT) protein is dCTP deaminase.